The sequence spans 294 residues: Bifunctional protein FolD (294 aa).

NADP(+) is bound by residues 166-168 (GRS), serine 191, and isoleucine 232.

The protein belongs to the tetrahydrofolate dehydrogenase/cyclohydrolase family. In terms of assembly, homodimer.

It catalyses the reaction (6R)-5,10-methylene-5,6,7,8-tetrahydrofolate + NADP(+) = (6R)-5,10-methenyltetrahydrofolate + NADPH. It carries out the reaction (6R)-5,10-methenyltetrahydrofolate + H2O = (6R)-10-formyltetrahydrofolate + H(+). It participates in one-carbon metabolism; tetrahydrofolate interconversion. Functionally, catalyzes the oxidation of 5,10-methylenetetrahydrofolate to 5,10-methenyltetrahydrofolate and then the hydrolysis of 5,10-methenyltetrahydrofolate to 10-formyltetrahydrofolate. The sequence is that of Bifunctional protein FolD from Nitrobacter winogradskyi (strain ATCC 25391 / DSM 10237 / CIP 104748 / NCIMB 11846 / Nb-255).